A 388-amino-acid chain; its full sequence is MLKAVHFGAGNIGRGFIGYLLYKSGYEITFVDISKELVESINNYKRYNVIILKDNVEKEEVKNIKAIHIEDEENLSKAIVDADIITTSVGANNLKSIGEKLRNYLKIRKANIDKPLNIMACENALFATNILKNSILEKGDKDFIEYVNQKIGFPNTAVDRIVPNVDIKKELPIDVAVEDFYEWDIEKKAIIGDLNIKGAELVDDLEPYIERKLFLLNGAHATTAYLGYLKGYKYIHEAIQDDFIRNIVSKMQEEASIALSKKHNIKIDNLREYSNKVIKRFKNSYLKDEVVRVGREPTRKLSGNDRLMMPAKLCYEIGITPKFILYGIAAGFLFDYKEDPQACKIQDDIKNFGLEKTISKITGLEENSDLLHEIVKKYKELKETFRKR.

4–15 is an NAD(+) binding site; it reads AVHFGAGNIGRG.

The protein belongs to the mannitol dehydrogenase family.

It carries out the reaction D-mannitol 1-phosphate + NAD(+) = beta-D-fructose 6-phosphate + NADH + H(+). The protein is Mannitol-1-phosphate 5-dehydrogenase of Thermoanaerobacter pseudethanolicus (strain ATCC 33223 / 39E) (Clostridium thermohydrosulfuricum).